Consider the following 148-residue polypeptide: Large ribosomal subunit protein bL9 (148 aa).

It belongs to the bacterial ribosomal protein bL9 family.

Functionally, binds to the 23S rRNA. The polypeptide is Large ribosomal subunit protein bL9 (Bifidobacterium longum (strain DJO10A)).